Here is a 472-residue protein sequence, read N- to C-terminus: Glutamate--tRNA ligase 1 (472 aa).

A 'HIGH' region motif is present at residues 9–19; that stretch reads PSPTGLLHVGN. A compositionally biased stretch (basic and acidic residues) spans 112–131; the sequence is AMAEKRPPRYDGTWRDRDPS. The disordered stretch occupies residues 112-133; the sequence is AMAEKRPPRYDGTWRDRDPSEA. Residues 238 to 242 carry the 'KMSKS' region motif; the sequence is KLSKR. Lys241 is an ATP binding site.

It belongs to the class-I aminoacyl-tRNA synthetase family. Glutamate--tRNA ligase type 1 subfamily. As to quaternary structure, monomer.

Its subcellular location is the cytoplasm. It catalyses the reaction tRNA(Glu) + L-glutamate + ATP = L-glutamyl-tRNA(Glu) + AMP + diphosphate. Its function is as follows. Catalyzes the attachment of glutamate to tRNA(Glu) in a two-step reaction: glutamate is first activated by ATP to form Glu-AMP and then transferred to the acceptor end of tRNA(Glu). This is Glutamate--tRNA ligase 1 from Gluconobacter oxydans (strain 621H) (Gluconobacter suboxydans).